The sequence spans 372 residues: Cobalt-precorrin-5B C(1)-methyltransferase (372 aa).

This sequence belongs to the CbiD family.

It catalyses the reaction Co-precorrin-5B + S-adenosyl-L-methionine = Co-precorrin-6A + S-adenosyl-L-homocysteine. The protein operates within cofactor biosynthesis; adenosylcobalamin biosynthesis; cob(II)yrinate a,c-diamide from sirohydrochlorin (anaerobic route): step 6/10. Its function is as follows. Catalyzes the methylation of C-1 in cobalt-precorrin-5B to form cobalt-precorrin-6A. The chain is Cobalt-precorrin-5B C(1)-methyltransferase from Prochlorococcus marinus (strain MIT 9515).